The chain runs to 484 residues: UDP-N-acetylmuramoyl-L-alanyl-D-glutamate--L-lysine ligase (484 aa).

Ser-43 contacts UDP-N-acetyl-alpha-D-muramoyl-L-alanyl-D-glutamate. 119-125 provides a ligand contact to ATP; sequence GTKGKTT. Residues 161–162, Ser-188, and Arg-196 contribute to the UDP-N-acetyl-alpha-D-muramoyl-L-alanyl-D-glutamate site; that span reads TT. Lys-230 is subject to N6-carboxylysine. The L-lysine recognition motif motif lies at 405 to 408; it reads DDPN.

This sequence belongs to the MurCDEF family. MurE subfamily. Post-translationally, carboxylation is probably crucial for Mg(2+) binding and, consequently, for the gamma-phosphate positioning of ATP.

The protein resides in the cytoplasm. It catalyses the reaction UDP-N-acetyl-alpha-D-muramoyl-L-alanyl-D-glutamate + L-lysine + ATP = UDP-N-acetyl-alpha-D-muramoyl-L-alanyl-gamma-D-glutamyl-L-lysine + ADP + phosphate + H(+). The protein operates within cell wall biogenesis; peptidoglycan biosynthesis. Its function is as follows. Catalyzes the addition of L-lysine to the nucleotide precursor UDP-N-acetylmuramoyl-L-alanyl-D-glutamate (UMAG) in the biosynthesis of bacterial cell-wall peptidoglycan. The protein is UDP-N-acetylmuramoyl-L-alanyl-D-glutamate--L-lysine ligase of Streptococcus agalactiae serotype III (strain NEM316).